The following is a 361-amino-acid chain: MSKQQPTQFINPETPGYVGFANLPNQVHRKSVKKGFEFTLMVVGESGLGKSTLINSLFLTDLYPERIIPGAAEKIERTVQIEASTVEIEERGVKLRLTVVDTPGYGDAINCRDCFKTIISYIDEQFERYLHDESGLNRRHIIDNRVHCCFYFISPFGHGLKPLDVAFMKAIHNKVNIVPVIAKADTLTLKERERLKKRILDEIEEHSIKIYHLPDAESDEDEDFKEQTRLLKASIPFSVVGSNQLIEAKGKKVRGRLYPWGVVEVENPEHNDFLKLRTMLITHMQDLQEVTQDLHYENFRSERLKRGGRKVENEDMNKDQILLEKEAELRRMQEMIARMQAQMQMQMQGGDSDSGALGQHV.

Tyr17 carries the phosphotyrosine modification. Residues 34-306 form the Septin-type G domain; that stretch reads KGFEFTLMVV…ENFRSERLKR (273 aa). The interval 44–51 is G1 motif; that stretch reads GESGLGKS. Residues 44-52, Thr78, Gly104, and 183-186 each bind GTP; these read GESGLGKST and KADT. Positions 101–104 are G3 motif; sequence DTPG. Residues 182 to 185 form a G4 motif region; the sequence is AKAD. Lys190 carries the N6-acetyllysine modification. A Phosphotyrosine modification is found at Tyr211. Ser218 carries the post-translational modification Phosphoserine. Positions 241, 256, and 258 each coordinate GTP. The important for dimerization stretch occupies residues 260-270; sequence WGVVEVENPEH.

It belongs to the TRAFAC class TrmE-Era-EngA-EngB-Septin-like GTPase superfamily. Septin GTPase family. In terms of assembly, septins polymerize into heterooligomeric protein complexes that form filaments, and associate with cellular membranes, actin filaments and microtubules. GTPase activity is required for filament formation. Septin filaments are assembled from asymmetrical heterotrimers, composed of SEPTIN2, SEPTIN6 and SEPTIN7 that associate head-to-head to form a hexameric unit. Interaction between SEPTIN2 and SEPTIN7 seems indirect. Also interacts with SEPTIN9 and SEPTIN5. Interaction with SEPTIN4 not detected. Component of a septin core octameric complex consisting of SEPTIN12, SEPTIN7, SEPTIN6 and SEPTIN2 or SEPTIN4 in the order 12-7-6-2-2-6-7-12 or 12-7-6-4-4-6-7-12 and located in the sperm annulus. Interacts with MAP4. Interacts with DZIP1L. As to expression, widely expressed.

It localises to the cytoplasm. It is found in the cytoskeleton. The protein resides in the spindle. The protein localises to the chromosome. Its subcellular location is the centromere. It localises to the kinetochore. It is found in the cleavage furrow. The protein resides in the midbody. The protein localises to the cell cortex. Its subcellular location is the cell projection. It localises to the cilium membrane. It is found in the cilium. The protein resides in the flagellum. In terms of biological role, filament-forming cytoskeletal GTPase. Forms a filamentous structure with SEPTIN12, SEPTIN6, SEPTIN2 and probably SEPTIN4 at the sperm annulus which is required for the structural integrity and motility of the sperm tail during postmeiotic differentiation. Required for normal organization of the actin cytoskeleton. Plays a role in the biogenesis of polarized columnar-shaped epithelium by maintaining polyglutamylated microtubules, thus facilitating efficient vesicle transport, and by impeding MAP4 binding to tubulin. Required for the progression through mitosis. Forms a scaffold at the midplane of the mitotic splindle required to maintain CENPE localization at kinetochores and consequently chromosome congression. During anaphase, may be required for chromosome segregation and spindle elongation. Plays a role in ciliogenesis and collective cell movements. In cilia, required for the integrity of the diffusion barrier at the base of the primary cilium that prevents diffusion of transmembrane proteins between the cilia and plasma membranes: probably acts by regulating the assembly of the tectonic-like complex (also named B9 complex) by localizing TMEM231 protein. This chain is Septin-2, found in Mus musculus (Mouse).